Here is a 485-residue protein sequence, read N- to C-terminus: MTITPQNLIALLPLLIVGLTVVVVMLSIAWRRNHFLNATLSVIGLNAALVSLWFVGQAGAMDVTPLMRVDGFAMLYTGLVLLASLATCTFAYPWLEGYNDNKDEFYLLVLIAALGGILLANANHLASLFLGIELISLPLFGLVGYAFRQKRSLEASIKYTILSAAASSFLLFGMALVYAQSGDLSFVALGKNLGDGMLNEPLLLAGFGMMIVGLGFKLSLVPFHLWTPDVYQGAPAPVSTFLATASKIAIFGVVMRLFLYAPVGDSEAIRVVLAIIAFASIIFGNLMALSQTNIKRLLGYSSISHLGYLLVALIALQTGEMSMEAVGGYLAGYLFSSLGAFGVVSLMSSPYRGPDADSLFSYRGLFWHRPILAAVMTVMMLSLAGIPMTLGFIGKFYVLAVGVQAHLWWLVGAVVVGSAIGLYYYLRVAVSLYLHAPEQPGRDAPSNWQYSAGGIVVLISALLVLVLGVWPQPLISIVRLAMPLM.

14 helical membrane passes run 8 to 28 (LIALLPLLIVGLTVVVVMLSI), 35 to 55 (FLNATLSVIGLNAALVSLWFV), 71 to 91 (GFAMLYTGLVLLASLATCTFA), 105 to 125 (FYLLVLIAALGGILLANANHL), 127 to 147 (SLFLGIELISLPLFGLVGYAF), 159 to 179 (YTILSAAASSFLLFGMALVYA), 203 to 223 (LLAGFGMMIVGLGFKLSLVPF), 235 to 255 (PAPVSTFLATASKIAIFGVVM), 271 to 291 (VVLAIIAFASIIFGNLMALSQ), 297 to 317 (LLGYSSISHLGYLLVALIALQ), 326 to 346 (VGGYLAGYLFSSLGAFGVVSL), 373 to 393 (AAVMTVMMLSLAGIPMTLGFI), 408 to 430 (WWLVGAVVVGSAIGLYYYLRVAV), and 455 to 475 (IVVLISALLVLVLGVWPQPLI).

The protein belongs to the complex I subunit 2 family. In terms of assembly, NDH-1 is composed of 13 different subunits. Subunits NuoA, H, J, K, L, M, N constitute the membrane sector of the complex.

It is found in the cell inner membrane. The catalysed reaction is a quinone + NADH + 5 H(+)(in) = a quinol + NAD(+) + 4 H(+)(out). NDH-1 shuttles electrons from NADH, via FMN and iron-sulfur (Fe-S) centers, to quinones in the respiratory chain. The immediate electron acceptor for the enzyme in this species is believed to be ubiquinone. Couples the redox reaction to proton translocation (for every two electrons transferred, four hydrogen ions are translocated across the cytoplasmic membrane), and thus conserves the redox energy in a proton gradient. In Shigella boydii serotype 18 (strain CDC 3083-94 / BS512), this protein is NADH-quinone oxidoreductase subunit N.